We begin with the raw amino-acid sequence, 296 residues long: Nucleotide-binding protein Pnec_1620 (296 aa).

8-15 (GISGSGKS) is a binding site for ATP. 57–60 (DARR) serves as a coordination point for GTP.

This sequence belongs to the RapZ-like family.

Functionally, displays ATPase and GTPase activities. This Polynucleobacter necessarius subsp. necessarius (strain STIR1) protein is Nucleotide-binding protein Pnec_1620.